A 103-amino-acid polypeptide reads, in one-letter code: Small ribosomal subunit protein uS10 (103 aa).

The protein belongs to the universal ribosomal protein uS10 family. Part of the 30S ribosomal subunit.

Functionally, involved in the binding of tRNA to the ribosomes. This is Small ribosomal subunit protein uS10 from Bordetella parapertussis (strain 12822 / ATCC BAA-587 / NCTC 13253).